Reading from the N-terminus, the 533-residue chain is Calcium uptake protein 1 homolog, mitochondrial (533 aa).

The N-terminal 13 residues, 1–13, are a transit peptide targeting the mitochondrion; it reads MLRHNFRSSIFIR. The tract at residues 127–147 is disordered; the sequence is PFRPEASQKEESTDSGTEIEV. EF-hand domains follow at residues 270-305, 337-358, and 465-500; these read TSHA…IMSQ, KDGK…LQHD, and LSDH…RMRR. D283, D285, N287, and E294 together coordinate Ca(2+).

It belongs to the MICU1 family. MICU1 subfamily.

It is found in the mitochondrion intermembrane space. It localises to the mitochondrion inner membrane. In terms of biological role, calcium sensor of the mitochondrial calcium uniporter (mcu-1) channel, which senses calcium level via its EF-hand domains. At low calcium levels, micu-1 occludes the pore of the mcu-1 channel, preventing mitochondrial calcium uptake. At higher calcium levels, calcium-binding to micu-1 induces a conformational change that weakens mcu-1-micu-1 interactions and moves micu-1 away from the pore, allowing calcium permeation through the mcu-1 channel. Also required to protect against manganese toxicity by preventing manganese uptake by mcu-1. Modulates the activity of the mitochondrial calcium uniporter protein mcu-1 depending on the level of intracellular calcium in PLM touch receptor neurons following axonal injury. In Caenorhabditis briggsae, this protein is Calcium uptake protein 1 homolog, mitochondrial.